The primary structure comprises 259 residues: Oxidase ustYb (259 aa).

The helical transmembrane segment at Ile36–Phe56 threads the bilayer. Asn102 and Asn122 each carry an N-linked (GlcNAc...) asparagine glycan. 2 short sequence motifs (HXXHC) span residues His147–Cys151 and His197–Cys201.

It belongs to the ustYa family.

Its subcellular location is the membrane. It participates in mycotoxin biosynthesis. Oxidase; part of the gene cluster that mediates the biosynthesis of the secondary metabolite ustiloxin B, an antimitotic tetrapeptide. First, ustA is processed by the subtilisin-like endoprotease Kex2 that is outside the ustiloxin B gene cluster, at the C-terminal side of Arg-Lys, after transfer to Golgi apparatus through the endoplasmic reticulum (ER). Cleavage by KEX2 generates 16 peptides YAIG-I to YAIG-XVI. To process the precursor peptide further, at least two peptidases are necessary to cleave the N-terminal and C-terminal sides of the Tyr-Ala-Ile-Gly core peptide which serves as backbone for the synthesis of ustiloxin B, through cyclization and modification of the tyrosine with a non-protein coding amino acid, norvaline. One of the two peptidases must be the serine peptidase ustP; and the other pepdidase is probably ustH. Macrocyclization of the core peptide derived from ustA requires the tyrosinase ustQ, as well as the homologous oxidases ustYa and ustYb, and leads to the production of the first cyclization product N-desmethylustiloxin F. For the formation of N-desmethylustiloxin F, three oxidation steps are required, hydroxylation at the benzylic position, hydroxylation at either the aromatic ring of Tyr or beta-position of Ile, and oxidative cyclization. UstQ may catalyze the oxidation of a phenol moiety, whereas the ustYa and ustYb are most likely responsible for the remaining two-step oxidations. N-desmethylustiloxin F is then methylated by ustM to yield ustiloxin F which in turn substrate of the cytochrome P450 monooxygenase ustC which catalyzes the formation of S-deoxyustiloxin H. The flavoprotein monooxygenases ustF1 and ustF2 then participate in the modification of the side chain of S-deoxyustiloxin H, leading to the synthesis of an oxime intermediate, via ustiloxin H. Finally, carboxylative dehydration performed by the cysteine desulfurase-like protein ustD yields ustiloxin B. The chain is Oxidase ustYb from Aspergillus flavus (strain ATCC 200026 / FGSC A1120 / IAM 13836 / NRRL 3357 / JCM 12722 / SRRC 167).